A 35-amino-acid polypeptide reads, in one-letter code: Phosphoribulokinase (35 aa).

The protein belongs to the phosphoribulokinase family.

It localises to the plastid. The protein localises to the chloroplast. The enzyme catalyses D-ribulose 5-phosphate + ATP = D-ribulose 1,5-bisphosphate + ADP + H(+). The protein operates within carbohydrate biosynthesis; Calvin cycle. Light regulated via thioredoxin by reversible oxidation/reduction of sulfhydryl/disulfide groups. The sequence is that of Phosphoribulokinase from Pinus pinaster (Maritime pine).